The sequence spans 413 residues: Multifunctional CCA protein (413 aa).

ATP contacts are provided by G8 and R11. The CTP site is built by G8 and R11. Mg(2+) contacts are provided by D21 and D23. ATP-binding residues include R91, R141, and R144. 3 residues coordinate CTP: R91, R141, and R144. The HD domain occupies T230 to L331.

This sequence belongs to the tRNA nucleotidyltransferase/poly(A) polymerase family. Bacterial CCA-adding enzyme type 1 subfamily. Monomer. Can also form homodimers and oligomers. It depends on Mg(2+) as a cofactor. The cofactor is Ni(2+).

It catalyses the reaction a tRNA precursor + 2 CTP + ATP = a tRNA with a 3' CCA end + 3 diphosphate. It carries out the reaction a tRNA with a 3' CCA end + 2 CTP + ATP = a tRNA with a 3' CCACCA end + 3 diphosphate. Its function is as follows. Catalyzes the addition and repair of the essential 3'-terminal CCA sequence in tRNAs without using a nucleic acid template. Adds these three nucleotides in the order of C, C, and A to the tRNA nucleotide-73, using CTP and ATP as substrates and producing inorganic pyrophosphate. tRNA 3'-terminal CCA addition is required both for tRNA processing and repair. Also involved in tRNA surveillance by mediating tandem CCA addition to generate a CCACCA at the 3' terminus of unstable tRNAs. While stable tRNAs receive only 3'-terminal CCA, unstable tRNAs are marked with CCACCA and rapidly degraded. The chain is Multifunctional CCA protein from Verminephrobacter eiseniae (strain EF01-2).